The chain runs to 79 residues: Small ribosomal subunit protein bS18B (79 aa).

A compositionally biased stretch (basic and acidic residues) spans M1–P11. The interval M1–V24 is disordered.

The protein belongs to the bacterial ribosomal protein bS18 family. As to quaternary structure, part of the 30S ribosomal subunit. Forms a tight heterodimer with protein bS6.

Its function is as follows. Binds as a heterodimer with protein bS6 to the central domain of the 16S rRNA, where it helps stabilize the platform of the 30S subunit. This is Small ribosomal subunit protein bS18B from Streptomyces coelicolor (strain ATCC BAA-471 / A3(2) / M145).